Reading from the N-terminus, the 88-residue chain is UPF0297 protein SSU98_0066 (88 aa).

This sequence belongs to the UPF0297 family.

This Streptococcus suis (strain 98HAH33) protein is UPF0297 protein SSU98_0066.